Reading from the N-terminus, the 339-residue chain is Dihydroorotate dehydrogenase (quinone) (339 aa).

FMN is bound by residues 64-68 (AGADK) and Thr-88. Lys-68 lines the substrate pocket. 113–117 (NRNGF) contacts substrate. Residues Asn-141 and Asn-174 each contribute to the FMN site. Asn-174 contributes to the substrate binding site. Ser-177 acts as the Nucleophile in catalysis. Asn-179 serves as a coordination point for substrate. Lys-219 and Thr-247 together coordinate FMN. 248 to 249 (NT) is a substrate binding site. FMN contacts are provided by residues Gly-270, Gly-299, and 320–321 (YS).

The protein belongs to the dihydroorotate dehydrogenase family. Type 2 subfamily. Monomer. It depends on FMN as a cofactor.

The protein resides in the cell membrane. The catalysed reaction is (S)-dihydroorotate + a quinone = orotate + a quinol. The protein operates within pyrimidine metabolism; UMP biosynthesis via de novo pathway; orotate from (S)-dihydroorotate (quinone route): step 1/1. Functionally, catalyzes the conversion of dihydroorotate to orotate with quinone as electron acceptor. The chain is Dihydroorotate dehydrogenase (quinone) from Haemophilus influenzae (strain PittGG).